Consider the following 251-residue polypeptide: Gamma-glutamyl peptidase 4 (251 aa).

One can recognise a Glutamine amidotransferase type-1 domain in the interval 16-213; that stretch reads SEFAKKTYGG…IDRVLAGGHI (198 aa). The active-site Nucleophile is the Cys100. Active-site residues include His192 and Glu194.

It belongs to the peptidase C26 family.

It localises to the cytoplasm. The protein localises to the cytosol. Its pathway is secondary metabolite biosynthesis. Functionally, involved in glucosinolate biosynthesis. Hydrolyzes the gamma-glutamyl peptide bond of several glutathione (GSH) conjugates to produce Cys-Gly conjugates related to glucosinolates. The gamma-Glu-Cys-Gly-GSH conjugates are the sulfur-donating molecule in glucosinolate biosynthesis. This Arabidopsis thaliana (Mouse-ear cress) protein is Gamma-glutamyl peptidase 4.